We begin with the raw amino-acid sequence, 458 residues long: Periphilin-1 (458 aa).

Basic and acidic residues-rich tracts occupy residues 1–18 (MWSEGRYEYERIPRERAP) and 63–107 (EGRS…DGFR). 2 disordered regions span residues 1–51 (MWSE…SYNR) and 63–284 (EGRS…LFED). The Nuclear localization signal motif lies at 103-109 (RDGFRRK). Lys-109 is covalently cross-linked (Glycyl lysine isopeptide (Lys-Gly) (interchain with G-Cter in SUMO2)). Ser-110, Ser-114, Ser-133, and Ser-140 each carry phosphoserine. Over residues 116–142 (YARERSPYKRDNTFFRESPVGRKDSPH) the composition is skewed to basic and acidic residues. The span at 143 to 154 (SRSGSSVSSRSY) shows a compositional bias: low complexity. Lys-160 is covalently cross-linked (Glycyl lysine isopeptide (Lys-Gly) (interchain with G-Cter in SUMO2)). Phosphoserine is present on residues Ser-161 and Ser-167. Lys-180 participates in a covalent cross-link: Glycyl lysine isopeptide (Lys-Gly) (interchain with G-Cter in SUMO2). Basic and acidic residues predominate over residues 181–194 (RQNEGNPERDKERP). Ser-197 is modified (phosphoserine). Lys-199 is covalently cross-linked (Glycyl lysine isopeptide (Lys-Gly) (interchain with G-Cter in SUMO2)). Ser-201 and Ser-205 each carry phosphoserine. The span at 205–215 (SPSSGSAVSSS) shows a compositional bias: low complexity. The span at 217–230 (VLDKPSRLTEKELA) shows a compositional bias: basic and acidic residues. Lys-227 participates in a covalent cross-link: Glycyl lysine isopeptide (Lys-Gly) (interchain with G-Cter in SUMO2). Lys-235 and Lys-240 each carry N6-acetyllysine; alternate. Residues Lys-235 and Lys-240 each participate in a glycyl lysine isopeptide (Lys-Gly) (interchain with G-Cter in SUMO2); alternate cross-link. Residues 237-246 (AAEKLEKSDE) show a composition bias toward basic and acidic residues. Residue Ser-325 is modified to Phosphoserine. Lys-328 is covalently cross-linked (Glycyl lysine isopeptide (Lys-Gly) (interchain with G-Cter in SUMO2)). The tract at residues 345–406 (GQTWQQVPPV…TQLRRTTGAP (62 aa)) is disordered. Residues 377–386 (PQPPQAPQPL) show a composition bias toward pro residues. The span at 388–398 (PRKKRVRRTTQ) shows a compositional bias: basic residues. Lys-453 is covalently cross-linked (Glycyl lysine isopeptide (Lys-Gly) (interchain with G-Cter in SUMO2)).

As to quaternary structure, homodimer. Component of the HUSH complex; at least composed of TASOR, PPHLN1 and MPHOSPH8. Interacts with SIN3A and HDAC1. May interact with PPL. Post-translationally, substrate of transglutaminase (in vitro). As to expression, ubiquitous.

It localises to the nucleus. The protein localises to the cytoplasm. Its subcellular location is the chromosome. Functionally, component of the HUSH complex, a multiprotein complex that mediates epigenetic repression. The HUSH complex is recruited to genomic loci rich in H3K9me3 and is probably required to maintain transcriptional silencing by promoting recruitment of SETDB1, a histone methyltransferase that mediates further deposition of H3K9me3. In the HUSH complex, contributes to the maintenance of the complex at chromatin. Acts as a transcriptional corepressor and regulates the cell cycle, probably via the HUSH complex. The HUSH complex is also involved in the silencing of unintegrated retroviral DNA: some part of the retroviral DNA formed immediately after infection remains unintegrated in the host genome and is transcriptionally repressed. May be involved in epithelial differentiation by contributing to epidermal integrity and barrier formation. The sequence is that of Periphilin-1 from Homo sapiens (Human).